A 332-amino-acid polypeptide reads, in one-letter code: 2,7-dihydroxy-5-methyl-1-naphthoate 7-O-methyltransferase (332 aa).

Substrate is bound at residue R11. S-adenosyl-L-methionine contacts are provided by residues W133, H153, 175 to 179 (DVGGG), G177, D200, 227 to 228 (SF), and 242 to 243 (SA). H246 (proton acceptor) is an active-site residue. D247 provides a ligand contact to substrate.

This sequence belongs to the class I-like SAM-binding methyltransferase superfamily. Cation-independent O-methyltransferase family.

It carries out the reaction 2,7-dihydroxy-5-methyl-1-naphthoate + S-adenosyl-L-methionine = 2-hydroxy-7-methoxy-5-methyl-1-naphthoate + S-adenosyl-L-homocysteine + H(+). Its pathway is antibiotic biosynthesis. S-adenosyl-L-methionine-dependent O-methyltransferase that catalyzes regiospecific methylation at the 7-hydroxy group of 2,7-dihydroxy-5-methyl-1-naphthoate in the biosynthesis of the naphthoate moiety of the neocarzinostatin chromophore. Also recognizes other dihydroxynaphthoate as substrates and catalyzes their regiospecific O-methylation. The carboxylate and its ortho-hydroxy groups of the substrate appear to be crucial for NcsB1 substrate recognition and binding, and O-methylation takes place only at the free hydroxy group of these dihydroxynaphthoic acids. The chain is 2,7-dihydroxy-5-methyl-1-naphthoate 7-O-methyltransferase from Streptomyces carzinostaticus.